The sequence spans 252 residues: Hydroxyacylglutathione hydrolase (252 aa).

Positions 54, 56, 58, 59, 111, 128, and 166 each coordinate Zn(2+).

It belongs to the metallo-beta-lactamase superfamily. Glyoxalase II family. In terms of assembly, monomer. It depends on Zn(2+) as a cofactor.

It catalyses the reaction an S-(2-hydroxyacyl)glutathione + H2O = a 2-hydroxy carboxylate + glutathione + H(+). It participates in secondary metabolite metabolism; methylglyoxal degradation; (R)-lactate from methylglyoxal: step 2/2. Its function is as follows. Thiolesterase that catalyzes the hydrolysis of S-D-lactoyl-glutathione to form glutathione and D-lactic acid. The polypeptide is Hydroxyacylglutathione hydrolase (Vibrio vulnificus (strain CMCP6)).